Reading from the N-terminus, the 179-residue chain is Large ribosomal subunit protein uL6 (179 aa).

Belongs to the universal ribosomal protein uL6 family. In terms of assembly, part of the 50S ribosomal subunit.

In terms of biological role, this protein binds to the 23S rRNA, and is important in its secondary structure. It is located near the subunit interface in the base of the L7/L12 stalk, and near the tRNA binding site of the peptidyltransferase center. This is Large ribosomal subunit protein uL6 from Rhodococcus erythropolis (strain PR4 / NBRC 100887).